Reading from the N-terminus, the 212-residue chain is Acyl-homoserine-lactone synthase (212 aa).

It belongs to the autoinducer synthase family.

It catalyses the reaction a fatty acyl-[ACP] + S-adenosyl-L-methionine = an N-acyl-L-homoserine lactone + S-methyl-5'-thioadenosine + holo-[ACP] + H(+). In terms of biological role, required for the synthesis of autoinducer molecules which bind to RaiR and that are involved in the restriction of nodule number. The protein is Acyl-homoserine-lactone synthase (raiI) of Rhizobium etli.